The sequence spans 316 residues: Pantothenate kinase (316 aa).

Position 95 to 102 (95 to 102) interacts with ATP; it reads GSVAVGKS.

It belongs to the prokaryotic pantothenate kinase family.

The protein localises to the cytoplasm. The enzyme catalyses (R)-pantothenate + ATP = (R)-4'-phosphopantothenate + ADP + H(+). It functions in the pathway cofactor biosynthesis; coenzyme A biosynthesis; CoA from (R)-pantothenate: step 1/5. In Shewanella putrefaciens (strain CN-32 / ATCC BAA-453), this protein is Pantothenate kinase.